Reading from the N-terminus, the 79-residue chain is Protein OPG081 (79 aa).

Residues valine 2–leucine 8 are Intravirion-facing. The chain crosses the membrane as a helical span at residues threonine 9–valine 29. At lysine 30–arginine 47 the chain is on the virion surface side. A helical transmembrane segment spans residues threonine 48–tyrosine 68. Residues alanine 69–asparagine 79 lie on the Intravirion side of the membrane.

It belongs to the orthopoxvirus OPG081 family.

The protein resides in the virion membrane. Its function is as follows. Envelope protein. This is Protein OPG081 (OPG081) from Cynomys gunnisoni (Gunnison's prairie dog).